Reading from the N-terminus, the 349-residue chain is T-cell immunoglobulin and mucin domain-containing protein 2 (349 aa).

The N-terminal stretch at 1 to 20 is a signal peptide; the sequence is MVQLQVFISGLLLLLPGAVA. Topologically, residues 21 to 275 are extracellular; it reads SYTVVQGHSV…QKLQRNPTKG (255 aa). In terms of domain architecture, Ig-like V-type spans 22–123; it reads YTVVQGHSVT…AFYFVDYLLE (102 aa). 3 disulfide bridges follow: Cys34/Cys107, Cys48/Cys59, and Cys54/Cys106. 2 N-linked (GlcNAc...) asparagine glycosylation sites follow: Asn84 and Asn89. Residues 128–271 form a disordered region; it reads LPTSPPTRPT…AIPPQKLQRN (144 aa). Over residues 136–215 the composition is skewed to low complexity; sequence PTNTGRPTTT…TSTPPTPEQT (80 aa). The segment covering 222-260 has biased composition (polar residues); it reads ATTYYPDQTTAEVTEAPSHTPTDWNNTATSSDDSWNSDT. The chain crosses the membrane as a helical span at residues 276-296; it reads FYVGMSFAALLLLLLASTVAI. Residues 297-349 lie on the Cytoplasmic side of the membrane; the sequence is TRYMVMRKNSGSLRFVAFPVSKIGASQNKVVEQARIEDEVYIIEDSPYFEEES.

The protein belongs to the immunoglobulin superfamily. TIM family. In terms of assembly, homodimer.

The protein resides in the cell membrane. Functionally, probable receptor for SEMA4A involved in the regulation of T-cell function. The interaction with SEMA4A enhances T-cell activation. This chain is T-cell immunoglobulin and mucin domain-containing protein 2 (Timd2), found in Rattus norvegicus (Rat).